The primary structure comprises 662 residues: ATP-dependent zinc metalloprotease FtsH (662 aa).

Residues 1–15 are compositionally biased toward basic and acidic residues; sequence MSENPVKRPGKDGSR. A disordered region spans residues 1–35; it reads MSENPVKRPGKDGSRNKFKPVQEEGGTPGWFRSKG. The Cytoplasmic portion of the chain corresponds to 1–39; it reads MSENPVKRPGKDGSRNKFKPVQEEGGTPGWFRSKGESPQ. The helical transmembrane segment at 40-60 threads the bilayer; sequence GKFPGFLLFLMAGLLMLFVFL. Residues 61–154 lie on the Periplasmic side of the membrane; it reads RFFSGTDAPE…LKVEKGSSDL (94 aa). The chain crosses the membrane as a helical span at residues 155–175; the sequence is NTFLALFAPWIIFAALYFFLF. At 176–662 the chain is on the cytoplasmic side; the sequence is RRMSGQNGAQ…QGALPNPVTA (487 aa). 250-257 provides a ligand contact to ATP; the sequence is GPPGTGKT. His-472 provides a ligand contact to Zn(2+). The active site involves Glu-473. Zn(2+)-binding residues include His-476 and Asp-548.

This sequence in the central section; belongs to the AAA ATPase family. The protein in the C-terminal section; belongs to the peptidase M41 family. As to quaternary structure, homohexamer. Zn(2+) is required as a cofactor.

The protein localises to the cell inner membrane. In terms of biological role, acts as a processive, ATP-dependent zinc metallopeptidase for both cytoplasmic and membrane proteins. Plays a role in the quality control of integral membrane proteins. The protein is ATP-dependent zinc metalloprotease FtsH of Pelodictyon phaeoclathratiforme (strain DSM 5477 / BU-1).